The primary structure comprises 279 residues: Gas vesicle protein L2 (279 aa).

The protein belongs to the gas vesicle GvpF/GvpL family. In terms of assembly, gvpF to GvpM interact with each other in vitro, and may form multi-subunit complex(es). Interacts with GvpC, GvpN and GvpO.

It localises to the gas vesicle. Proteins GvpF to GvpM might be involved in nucleating gas vesicle formation. A minor component of the gas vesicle. Gas vesicles are hollow, gas filled proteinaceous nanostructures found in several microbial planktonic microorganisms. They allow positioning of halobacteria at the optimal depth for growth in the poorly aerated, shallow brine pools of their habitat. Functionally, expression of 2 c-vac DNA fragments containing 2 divergently transcribed regions (gvpE-gvpF-gvpG-gvpH-gvpI-gvpJ-gvpK-gvpL-gvpM and gvpA-gvpC-gvpN-gvpO) allows H.volcanii to produce gas vesicles. This chain is Gas vesicle protein L2, found in Halobacterium salinarum (strain ATCC 700922 / JCM 11081 / NRC-1) (Halobacterium halobium).